Consider the following 585-residue polypeptide: A-type ATP synthase subunit A (585 aa).

231–238 (GPFGSGKT) serves as a coordination point for ATP.

Belongs to the ATPase alpha/beta chains family. As to quaternary structure, has multiple subunits with at least A(3), B(3), C, D, E, F, H, I and proteolipid K(x).

The protein localises to the cell membrane. It catalyses the reaction ATP + H2O + 4 H(+)(in) = ADP + phosphate + 5 H(+)(out). Component of the A-type ATP synthase that produces ATP from ADP in the presence of a proton gradient across the membrane. The A chain is the catalytic subunit. The protein is A-type ATP synthase subunit A of Desulfurococcus sp. (strain SY).